We begin with the raw amino-acid sequence, 390 residues long: F-box/kelch-repeat protein At3g06570 (390 aa).

In terms of domain architecture, F-box spans Ser23 to Arg69. 3 Kelch repeats span residues Asp140–Arg183, Ile185–Ala234, and Ile236–Asn281.

This is F-box/kelch-repeat protein At3g06570 from Arabidopsis thaliana (Mouse-ear cress).